Here is a 440-residue protein sequence, read N- to C-terminus: UDP-N-acetylmuramoylalanine--D-glutamate ligase (440 aa).

115 to 121 (GSNGKST) contributes to the ATP binding site.

It belongs to the MurCDEF family.

The protein localises to the cytoplasm. The enzyme catalyses UDP-N-acetyl-alpha-D-muramoyl-L-alanine + D-glutamate + ATP = UDP-N-acetyl-alpha-D-muramoyl-L-alanyl-D-glutamate + ADP + phosphate + H(+). The protein operates within cell wall biogenesis; peptidoglycan biosynthesis. In terms of biological role, cell wall formation. Catalyzes the addition of glutamate to the nucleotide precursor UDP-N-acetylmuramoyl-L-alanine (UMA). The protein is UDP-N-acetylmuramoylalanine--D-glutamate ligase of Vibrio cholerae serotype O1 (strain ATCC 39315 / El Tor Inaba N16961).